The following is a 182-amino-acid chain: MEILFVLFFVFVTVSGDCGVVTKDEWDGLTPIHVEYLARPVELVIIQHTVTSTCNTDAACAQIVRNIQSYHMDNLNYWDIGSSFIIGGNGKVYEGAGWLHVGAHTYGYNRKSIGITFIGNYNNDKPTQKSLDALRALLRCGVERGHLTANYHIVGHRQLISTESPGRKLYNEIRRWDHFLDN.

Residues 1–16 (MEILFVLFFVFVTVSG) form the signal peptide. Disulfide bonds link Cys18-Cys140 and Cys54-Cys60. The N-acetylmuramoyl-L-alanine amidase domain maps to 39–166 (RPVELVIIQH…RQLISTESPG (128 aa)).

This sequence belongs to the N-acetylmuramoyl-L-alanine amidase 2 family. In terms of assembly, monomer. Strongly expressed in fat body with weak expression observed in hemocyte. No expression detected in gut.

Its function is as follows. Binds specifically to peptidoglycan and triggers the propenoloxidase cascade which is an important insect innate immune defense mechanism. The polypeptide is Peptidoglycan recognition protein (PGRP) (Trichoplusia ni (Cabbage looper)).